The following is a 667-amino-acid chain: UvrABC system protein C (667 aa).

The GIY-YIG domain occupies 43–122; it reads AEPGCYLMRD…IKNQQPHFNV (80 aa). The UVR domain maps to 232–267; it reads QELKVLLEKQMERYSDRMDYESAANIRDQIKGLEQL.

The protein belongs to the UvrC family. In terms of assembly, interacts with UvrB in an incision complex.

The protein localises to the cytoplasm. Its function is as follows. The UvrABC repair system catalyzes the recognition and processing of DNA lesions. UvrC both incises the 5' and 3' sides of the lesion. The N-terminal half is responsible for the 3' incision and the C-terminal half is responsible for the 5' incision. The sequence is that of UvrABC system protein C from Prochlorococcus marinus (strain MIT 9313).